The chain runs to 62 residues: Large ribosomal subunit protein bL28 (62 aa).

The protein belongs to the bacterial ribosomal protein bL28 family.

This is Large ribosomal subunit protein bL28 from Desulforamulus reducens (strain ATCC BAA-1160 / DSM 100696 / MI-1) (Desulfotomaculum reducens).